Here is a 60-residue protein sequence, read N- to C-terminus: UPF0181 protein ESA_01442 (60 aa).

The protein belongs to the UPF0181 family.

The sequence is that of UPF0181 protein ESA_01442 from Cronobacter sakazakii (strain ATCC BAA-894) (Enterobacter sakazakii).